Here is a 682-residue protein sequence, read N- to C-terminus: Glutamine--fructose-6-phosphate aminotransferase [isomerizing] 2 (682 aa).

Residue Cys2 is the For GATase activity of the active site. One can recognise a Glutamine amidotransferase type-2 domain in the interval 2 to 288 (CGIFAYMNYR…DDDIAAVADG (287 aa)). Phosphoserine is present on Ser244. 2 consecutive SIS domains span residues 360 to 499 (HLKE…DRIS) and 531 to 672 (LALE…VDFP). Residues 377-378 (TS), 422-424 (SQS), Thr427, and His578 each bind substrate.

It carries out the reaction D-fructose 6-phosphate + L-glutamine = D-glucosamine 6-phosphate + L-glutamate. The protein operates within nucleotide-sugar biosynthesis; UDP-N-acetyl-alpha-D-glucosamine biosynthesis; alpha-D-glucosamine 6-phosphate from D-fructose 6-phosphate: step 1/1. Controls the flux of glucose into the hexosamine pathway. Most likely involved in regulating the availability of precursors for N- and O-linked glycosylation of proteins. The chain is Glutamine--fructose-6-phosphate aminotransferase [isomerizing] 2 (GFPT2) from Bos taurus (Bovine).